The primary structure comprises 364 residues: UDP-N-acetylglucosamine--N-acetylmuramyl-(pentapeptide) pyrophosphoryl-undecaprenol N-acetylglucosamine transferase (364 aa).

UDP-N-acetyl-alpha-D-glucosamine contacts are provided by residues 10-12 (TGG), asparagine 124, serine 195, isoleucine 250, and glutamine 295.

It belongs to the glycosyltransferase 28 family. MurG subfamily.

Its subcellular location is the cell membrane. It catalyses the reaction Mur2Ac(oyl-L-Ala-gamma-D-Glu-L-Lys-D-Ala-D-Ala)-di-trans,octa-cis-undecaprenyl diphosphate + UDP-N-acetyl-alpha-D-glucosamine = beta-D-GlcNAc-(1-&gt;4)-Mur2Ac(oyl-L-Ala-gamma-D-Glu-L-Lys-D-Ala-D-Ala)-di-trans,octa-cis-undecaprenyl diphosphate + UDP + H(+). It functions in the pathway cell wall biogenesis; peptidoglycan biosynthesis. In terms of biological role, cell wall formation. Catalyzes the transfer of a GlcNAc subunit on undecaprenyl-pyrophosphoryl-MurNAc-pentapeptide (lipid intermediate I) to form undecaprenyl-pyrophosphoryl-MurNAc-(pentapeptide)GlcNAc (lipid intermediate II). This Levilactobacillus brevis (strain ATCC 367 / BCRC 12310 / CIP 105137 / JCM 1170 / LMG 11437 / NCIMB 947 / NCTC 947) (Lactobacillus brevis) protein is UDP-N-acetylglucosamine--N-acetylmuramyl-(pentapeptide) pyrophosphoryl-undecaprenol N-acetylglucosamine transferase.